A 374-amino-acid polypeptide reads, in one-letter code: MSVALFCGPPPAVSFGCKDGRGRKGMVRSKDIVRQTVKPPAHACRLIGWNKYPGSVVPTNSSLSPSPTALDDEIELDLSPFLIIYKDGRIERLKGTTVIPACPEVATKDVIIDPATGVSVRLYLPNVVDLPSKKLPVLVYFHGGGFVIENTGSPNYHNYLTLLAAKSGLLIVSVNYRLAPEHPIPASFDDCMAGFNWVVSHSAGPAPEPWLARHGDLTQILISGDSAGGTVTHYVLLRADAGVIEGAALVHPYFLGSKRLENQTEEDFEFHEKLWRLSTPDTEGLDDPLINPLAPGAPSLAGLKCKRAVVFVAELDFLVERGRMYYDALVKSGWGGKAELVHQEGVGHVFHLSDYSGDVSVDMMAKMVAFLRGE.

Residues 1–68 (MSVALFCGPP…TNSSLSPSPT (68 aa)) constitute an amyloplast transit peptide. Residue serine 226 is the Acyl-ester intermediate of the active site. Catalysis depends on charge relay system residues aspartate 316 and histidine 348.

It belongs to the AB hydrolase superfamily. As to quaternary structure, homodimer. Highly expressed in pistil and bulb scales. Lower expression in stem, and barely detected in root, leaf, petal and stamen.

It localises to the plastid. The protein localises to the amyloplast. It catalyses the reaction 6-tuliposide A = tulipalin A + D-glucose. Lactone-forming carboxylesterases, specifically catalyzing intramolecular transesterification, but not hydrolysis. Involved in the biosynthesis of tulipalins, defensive chemicals that show antimicrobial activities against a broad range of strains of bacteria and fungi. Substrates are 6-tuliposide A &gt; 6-tuliposide B. In Tulipa gesneriana (Garden tulip), this protein is Tuliposide A-converting enzyme b1, amyloplastic (TCEA-B1).